The chain runs to 116 residues: Galanin-like peptide (116 aa).

The signal sequence occupies residues 1–24 (MAPPSVPLVLLLVLLLSLAETPAS). A propeptide spanning residues 87–116 (NVMETFAKPEIGDLGMLSMKIPKEEDVLKS) is cleaved from the precursor.

This sequence belongs to the galanin family. In terms of tissue distribution, isoform 2 is found in ganglia of ganglioneuroma and ganglioneuroblastoma, as well as in differentiated tumor cells of neuroblastoma tissues. Not found in undifferentiated neuroblasts. Isoform 2 is found in the skin, in pericytes covering microvascular arterioles and venules on their abluminal surfaces. In larger vessels, isoform 2 is expressed in layers of smooth muscle cells. Isoform 2 is not detected in endothelial cells.

The protein resides in the secreted. Hypothalamic neuropeptide which binds to the G-protein-coupled galanin receptors (GALR1, GALR2 and GALR3). Involved in a large number of putative physiological functions in CNS homeostatic processes, including the regulation of gonadotropin-releasing hormone secretion. Functionally, exhibits potent and dose-dependent vasoconstrictor and anti-edema activity in the cutaneous microvasculature, a physiologic effects which does not appear to be mediated via GALR1 or GALR2. Exhibits antimicrobial activity against Gram-negative bacterias, inducing bacterial membrane blebbing. In Homo sapiens (Human), this protein is Galanin-like peptide (GALP).